The chain runs to 398 residues: Maltoporin (398 aa).

Residues 1 to 30 form the signal peptide; sequence MTDKNNKRLFKVAPLATAIAASLFTVNASA.

It belongs to the porin LamB (TC 1.B.3) family. As to quaternary structure, homotrimer formed of three 18-stranded antiparallel beta-barrels, containing three independent channels.

It localises to the cell outer membrane. The enzyme catalyses beta-maltose(in) = beta-maltose(out). In terms of biological role, involved in the transport of maltose and maltodextrins. In Hahella chejuensis (strain KCTC 2396), this protein is Maltoporin.